The sequence spans 628 residues: Probable alpha-L-arabinofuranosidase A (628 aa).

An N-terminal signal peptide occupies residues 1–25 (MVAFSTISGLGALSLLFSIIESVDG). Asn36, Asn51, Asn74, Asn152, Asn164, Asn260, Asn359, Asn404, and Asn493 each carry an N-linked (GlcNAc...) asparagine glycan.

It belongs to the glycosyl hydrolase 51 family.

It localises to the secreted. It catalyses the reaction Hydrolysis of terminal non-reducing alpha-L-arabinofuranoside residues in alpha-L-arabinosides.. The protein operates within glycan metabolism; L-arabinan degradation. In terms of biological role, alpha-L-arabinofuranosidase involved in the degradation of arabinoxylan, a major component of plant hemicellulose. Acts only on small linear 1,5-alpha-linked L-arabinofuranosyl oligosaccharides. This is Probable alpha-L-arabinofuranosidase A (abfA) from Aspergillus terreus (strain NIH 2624 / FGSC A1156).